We begin with the raw amino-acid sequence, 767 residues long: ABC transporter B family member 4 (767 aa).

A disordered region spans residues Asn-81 to Asn-104. 5 helical membrane passes run Ile-208–Ile-228, Ala-252–Val-272, Val-324–Ile-344, Leu-350–Leu-370, and Ile-429–Trp-449. The ABC transmembrane type-1 domain occupies Phe-211–Ser-491. Positions Ile-524–Arg-760 constitute an ABC transporter domain. Position 559 to 566 (Gly-559 to Ser-566) interacts with ATP.

This sequence belongs to the ABC transporter superfamily. ABCB family. Multidrug resistance exporter (TC 3.A.1.201) subfamily.

The protein resides in the membrane. This chain is ABC transporter B family member 4 (abcB4), found in Dictyostelium discoideum (Social amoeba).